A 325-amino-acid polypeptide reads, in one-letter code: Probable flavonol synthase 5 (325 aa).

Positions 1–21 (MEEERDHNASESSLPSLSKQL) are disordered. Positions 10-21 (SESSLPSLSKQL) are enriched in polar residues. Positions 180 to 280 (TAEYVLRVNF…RISWPVFVAP (101 aa)) constitute a Fe2OG dioxygenase domain. 2-oxoglutarate is bound at residue 188-190 (NFY). Residues His205, Asp207, and His261 each contribute to the Fe cation site. 271-273 (RIS) provides a ligand contact to 2-oxoglutarate.

Belongs to the iron/ascorbate-dependent oxidoreductase family. Fe(2+) is required as a cofactor. Expressed in young seedlings.

The enzyme catalyses a (2R,3R)-dihydroflavonol + 2-oxoglutarate + O2 = a flavonol + succinate + CO2 + H2O. It participates in secondary metabolite biosynthesis; flavonoid biosynthesis. This Arabidopsis thaliana (Mouse-ear cress) protein is Probable flavonol synthase 5 (FLS5).